The following is a 345-amino-acid chain: S-adenosylmethionine:tRNA ribosyltransferase-isomerase (345 aa).

This sequence belongs to the QueA family. As to quaternary structure, monomer.

The protein resides in the cytoplasm. The enzyme catalyses 7-aminomethyl-7-carbaguanosine(34) in tRNA + S-adenosyl-L-methionine = epoxyqueuosine(34) in tRNA + adenine + L-methionine + 2 H(+). It participates in tRNA modification; tRNA-queuosine biosynthesis. In terms of biological role, transfers and isomerizes the ribose moiety from AdoMet to the 7-aminomethyl group of 7-deazaguanine (preQ1-tRNA) to give epoxyqueuosine (oQ-tRNA). This is S-adenosylmethionine:tRNA ribosyltransferase-isomerase from Shewanella pealeana (strain ATCC 700345 / ANG-SQ1).